A 321-amino-acid chain; its full sequence is MMSLAWPLFRVTEQAALAAWPQTGCGDKNKIDGLAVTAMRQALNDVAFRGRVVIGEGEIDHAPMLWIGEEVGKGDGPEVDIAVDPIEGTRMVAMGQSNALAVMAFAPRDSLLHAPDMYMKKLVVNRLAAGAIDLSLPLTDNLRNVAKALGKPLDKLRMVTLDKPRLSAAIEEATQLGVKVFALPDGDVAASVLTCWQDNPYDVMYTIGGAPEGVISACAVKALGGDMQAELIDFCQAKGDYTENRQIAEQERKRCKAMGVDVNRVYSLDELVRGNDILFSATGVTGGELVNGIQQTANGVRTQTLLIGGADQTCNIIDSLH.

Mn(2+) is bound by residues Asp32, Glu56, Asp84, and Glu87. Residues 87 to 89 (EGT), Tyr118, 163 to 165 (KPR), 185 to 187 (DGD), and Gly209 each bind substrate. Glu212 lines the Mn(2+) pocket.

Belongs to the FBPase class 2 family. As to quaternary structure, homodimer. Requires Mn(2+) as cofactor.

The catalysed reaction is beta-D-fructose 1,6-bisphosphate + H2O = beta-D-fructose 6-phosphate + phosphate. Its activity is regulated as follows. Competitively inhibited by low concentrations of phosphate (IC50 of 1.2 mM) and is also sensitive to Li(+) (IC50 of 15.8 mM). Also inhibited by 1 mM ATP or 50 mM KCl (60% and 20% residual activity, respectively). Slightly activated (40-50%) by the addition of 1 mM dithiothreitol in vitro. Catalyzes the hydrolysis of fructose 1,6-bisphosphate to fructose 6-phosphate. Also displays a low activity toward glucose 1,6-bisphosphate, and no activity against ribulose 1,5-bisphosphate, fructose 2,6-bisphosphate, or fructose 1-phosphate. The sequence is that of Fructose-1,6-bisphosphatase 2 class 2 (yggF) from Escherichia coli (strain K12).